The primary structure comprises 966 residues: Regulator of G-protein signaling 3 (966 aa).

A PDZ domain is found at 18-95 (QITIRRGKDG…EIILLVWRVV (78 aa)). The interval 115-135 (THDLLSPPNKREKNCTHGAPV) is disordered. Arg-167 is subject to Omega-N-methylarginine. Disordered stretches follow at residues 403-618 (EADE…TGAV) and 637-704 (YSQL…RVQN). Polar residues-rich tracts occupy residues 527 to 548 (PETSTSKDSPPGQGSSPTTELP) and 576 to 594 (SSASVQKRLPSQESPSSLG). A compositionally biased stretch (acidic residues) spans 649–675 (GEDEDAEEGEEGGEGEEDEEDDTSDDN). The span at 676 to 686 (YGDRSEAKRSS) shows a compositional bias: basic and acidic residues. Phosphoserine is present on residues Ser-712, Ser-715, Ser-747, and Ser-776. A disordered region spans residues 806 to 830 (FRRRNESPGAQPASKTDKTTKSFKP). A compositionally biased stretch (basic and acidic residues) spans 820–830 (KTDKTTKSFKP). The RGS domain occupies 841-966 (SLEKLLLHKY…INQKKMSPPL (126 aa)).

Binds the GNB1-GNG2 heterodimer. Binds EFNB1 and EFNB2. Phosphorylated by cyclic GMP-dependent protein kinase. In terms of processing, ISGylated. Detected in embryos from E8.5-16.5 in cortical ventricular zone, dorsal root ganglia and cerebellar primordia. Isoform 3 is detected in testis and in spermatocytes from newborn mice. Levels increase and reach a maximum after 21 days; after this they decrease again. Long isoforms are widely expressed.

The protein resides in the cytoplasm. It localises to the cell membrane. The protein localises to the nucleus. Down-regulates signaling from heterotrimeric G-proteins by increasing the GTPase activity of the alpha subunits, thereby driving them into their inactive GDP-bound form. Down-regulates G-protein-mediated release of inositol phosphates and activation of MAP kinases. This is Regulator of G-protein signaling 3 (Rgs3) from Mus musculus (Mouse).